We begin with the raw amino-acid sequence, 700 residues long: Polyphosphate kinase (700 aa).

N45 serves as a coordination point for ATP. Positions 373 and 403 each coordinate Mg(2+). One can recognise a PLD phosphodiesterase 1 domain in the interval 428-462; it reads PGMKIHAKLLLITRREEQGFVRYAHIGTGNFHERT. The active-site Phosphohistidine intermediate is H433. ATP is bound by residues Y466, R562, and H590. In terms of domain architecture, PLD phosphodiesterase 2 spans 585–615; the sequence is DRFLEHPRVLVVHNDGDPQVFISSADWMERN.

The protein belongs to the polyphosphate kinase 1 (PPK1) family. The cofactor is Mg(2+). In terms of processing, an intermediate of this reaction is the autophosphorylated ppk in which a phosphate is covalently linked to a histidine residue through a N-P bond.

The catalysed reaction is [phosphate](n) + ATP = [phosphate](n+1) + ADP. Its function is as follows. Catalyzes the reversible transfer of the terminal phosphate of ATP to form a long-chain polyphosphate (polyP). The polypeptide is Polyphosphate kinase (Vibrio vulnificus (strain YJ016)).